Here is a 128-residue protein sequence, read N- to C-terminus: Putative histidinol dehydrogenase (128 aa).

A disordered region spans residues 21-84; it reads QRPDIAPRHH…EGQEKASGRR (64 aa). Composition is skewed to basic and acidic residues over residues 34–50 and 72–81; these read HRAE…RRTA and QGREGQEKAS.

This sequence belongs to the histidinol dehydrogenase family.

The enzyme catalyses L-histidinol + 2 NAD(+) + H2O = L-histidine + 2 NADH + 3 H(+). Its pathway is amino-acid biosynthesis; L-histidine biosynthesis; L-histidine from 5-phospho-alpha-D-ribose 1-diphosphate: step 9/9. Catalyzes the sequential NAD-dependent oxidations of L-histidinol to L-histidinaldehyde and then to L-histidine. In Azospirillum brasilense, this protein is Putative histidinol dehydrogenase (hisD).